A 265-amino-acid polypeptide reads, in one-letter code: Mlc titration factor A (265 aa).

Residues His111, His148, His152, and Glu211 each contribute to the Zn(2+) site.

Belongs to the MtfA family. As to quaternary structure, interacts with Mlc. The cofactor is Zn(2+).

It localises to the cytoplasm. Its function is as follows. Involved in the modulation of the activity of the glucose-phosphotransferase system (glucose-PTS). Interacts with the transcriptional repressor Mlc, preventing its interaction with DNA and leading to the modulation of expression of genes regulated by Mlc, including ptsG, which encodes the PTS system glucose-specific EIICB component. Functionally, shows zinc-dependent metallopeptidase activity. This Escherichia coli (strain SMS-3-5 / SECEC) protein is Mlc titration factor A.